Reading from the N-terminus, the 307-residue chain is tRNA pseudouridine synthase B (307 aa).

Asp-45 acts as the Nucleophile in catalysis.

It belongs to the pseudouridine synthase TruB family. Type 1 subfamily.

The enzyme catalyses uridine(55) in tRNA = pseudouridine(55) in tRNA. Functionally, responsible for synthesis of pseudouridine from uracil-55 in the psi GC loop of transfer RNAs. In Heliobacterium mobile (Heliobacillus mobilis), this protein is tRNA pseudouridine synthase B.